Reading from the N-terminus, the 210-residue chain is Small ribosomal subunit protein uS3 (210 aa).

The KH type-2 domain maps to 38-106 (IRAWLKKRLA…EVQINIVEIR (69 aa)).

This sequence belongs to the universal ribosomal protein uS3 family. In terms of assembly, part of the 30S ribosomal subunit. Forms a tight complex with proteins S10 and S14.

Functionally, binds the lower part of the 30S subunit head. Binds mRNA in the 70S ribosome, positioning it for translation. This is Small ribosomal subunit protein uS3 from Magnetococcus marinus (strain ATCC BAA-1437 / JCM 17883 / MC-1).